Reading from the N-terminus, the 483-residue chain is uncharacterized protein (483 aa).

The 61-residue stretch at 11–71 (RYRKGDIIEL…SRYLEARAIE (61 aa)) folds into the TRAM domain. Cysteine 84, cysteine 90, cysteine 93, and cysteine 187 together coordinate [4Fe-4S] cluster. Glutamine 312, tyrosine 341, glutamate 362, and aspartate 412 together coordinate S-adenosyl-L-methionine. The Nucleophile role is filled by cysteine 439.

Belongs to the class I-like SAM-binding methyltransferase superfamily. RNA M5U methyltransferase family.

This is an uncharacterized protein from Chlorobaculum tepidum (strain ATCC 49652 / DSM 12025 / NBRC 103806 / TLS) (Chlorobium tepidum).